Reading from the N-terminus, the 447-residue chain is Putative bacteriocin-SkfA transport system permease protein SkfF (447 aa).

Over 1–3 (MPF) the chain is Cytoplasmic. Residues 4–22 (LIMLLFVGAIGFQVSFVSR) form a helical membrane-spanning segment. The Extracellular portion of the chain corresponds to 23–29 (STTWDMS). The chain crosses the membrane as a helical span at residues 30-50 (IAGWVLTGVFILYTAFGLFSN). Residues 51-59 (RLPSQMADI) are Cytoplasmic-facing. A helical transmembrane segment spans residues 60 to 80 (IWLYGTATSFSKVVYSVLFFS). The Extracellular portion of the chain corresponds to 81–85 (VTWKA). Residues 86–104 (LLWIISAIFGDVLIVLLSG) traverse the membrane as a helical segment. Topologically, residues 105 to 113 (DHINLLGRS) are cytoplasmic. The chain crosses the membrane as a helical span at residues 114–134 (IIFVGLFFIAEVWLMSVSCAR). At 135 to 141 (TVKKMKR) the chain is on the extracellular side. The helical transmembrane segment at 142–160 (VYVLVFLLMLGIYSICLYR) threads the bilayer. The Cytoplasmic portion of the chain corresponds to 161 to 189 (FFFLQHSSGIWESIARFISGVGLVFDTLS). The helical transmembrane segment at 190-208 (PLYVVVFIGIITVSFMTIA) threads the bilayer. Over 209–247 (FTSRQVEMKESLVKEAEFWEEFQERQFGSGQIIQKPKTT) the chain is Extracellular. A helical transmembrane segment spans residues 248 to 268 (WWGLQGLNGIWSFLWLELLLF). The Cytoplasmic segment spans residues 269-297 (KKYLFFHSIHTVMLSGVFYVVIFMYPEWF). A helical transmembrane segment spans residues 298 to 318 (YLLFFLIVSAVMLSSYYSGIV). The Extracellular segment spans residues 319 to 341 (RHSQSGTLHLFPGALWKKIIILE). The helical transmembrane segment at 342-360 (LTNTVWLYILYCVSITFMA) threads the bilayer. Over 361-363 (VGN) the chain is Cytoplasmic. Residues 364–382 (LVYWYIYGLGIYIWFMTIR) traverse the membrane as a helical segment. The Extracellular portion of the chain corresponds to 383-404 (LFAFTHTNRNDIKLSLPQYYKS). A helical membrane pass occupies residues 405 to 423 (FFMALGLSGICLYVIHLLT). Residues 424–426 (ADW) are Cytoplasmic-facing. Residues 427-447 (YTLVVVVCIGSLSWCLFYRFR) traverse the membrane as a helical segment.

It localises to the cell membrane. Functionally, probably part of the ABC transporter SkfEF involved in the export of the bacteriocin SKF. Probably responsible for the translocation of bacteriocin SkfA across the membrane. The sequence is that of Putative bacteriocin-SkfA transport system permease protein SkfF from Bacillus subtilis (strain 168).